The sequence spans 804 residues: Phenylalanine--tRNA ligase beta subunit (804 aa).

The region spanning 40 to 153 is the tRNA-binding domain; the sequence is PLPDLRVVVG…SSYAVGEPFA (114 aa). The B5 domain occupies 400-476; the sequence is PALLVLPFRP…RLHGYDNIEA (77 aa). The Mg(2+) site is built by D454, D460, E463, and E464. Residues 710 to 802 form the FDX-ACB domain; that stretch reads SKFPAVQRDL…AESKLGAVIR (93 aa).

It belongs to the phenylalanyl-tRNA synthetase beta subunit family. Type 1 subfamily. Tetramer of two alpha and two beta subunits. Requires Mg(2+) as cofactor.

It is found in the cytoplasm. It carries out the reaction tRNA(Phe) + L-phenylalanine + ATP = L-phenylalanyl-tRNA(Phe) + AMP + diphosphate + H(+). The protein is Phenylalanine--tRNA ligase beta subunit of Chlorobium luteolum (strain DSM 273 / BCRC 81028 / 2530) (Pelodictyon luteolum).